The primary structure comprises 262 residues: Indole-3-glycerol phosphate synthase (262 aa).

This sequence belongs to the TrpC family.

It carries out the reaction 1-(2-carboxyphenylamino)-1-deoxy-D-ribulose 5-phosphate + H(+) = (1S,2R)-1-C-(indol-3-yl)glycerol 3-phosphate + CO2 + H2O. It participates in amino-acid biosynthesis; L-tryptophan biosynthesis; L-tryptophan from chorismate: step 4/5. The sequence is that of Indole-3-glycerol phosphate synthase from Thiobacillus denitrificans (strain ATCC 25259 / T1).